The sequence spans 197 residues: Signal peptidase complex catalytic subunit SEC11 (197 aa).

At 1–14 the chain is on the cytoplasmic side; sequence MLSSLAPYMANPRQ. The chain crosses the membrane as a helical; Signal-anchor for type II membrane protein span at residues 15 to 33; it reads TLTQVLNFALVLSTAFMLW. At 34 to 197 the chain is on the lumenal side; it reads KGLSVITNST…MGLMVVLQRE (164 aa). Asn-41 carries an N-linked (GlcNAc...) asparagine glycan. Catalysis depends on charge relay system residues Ser-53 and His-92. Basic and acidic residues predominate over residues 102–115; that stretch reads PGREDKKNVKKGGE. The disordered stretch occupies residues 102 to 134; it reads PGREDKKNVKKGGEEGEETSSTPSQKLLTKGDN. The Charge relay system role is filled by Asp-139. Positions 183–194 are C-terminal short (CTS) helix; the sequence is VLLGFMGLMVVL.

This sequence belongs to the peptidase S26B family. Component of the signal peptidase complex (SPC) composed of a catalytic subunit SEC11 and three accessory subunits SPC1, SPC2 and SPC3. The complex induces a local thinning of the ER membrane which is used to measure the length of the signal peptide (SP) h-region of protein substrates. This ensures the selectivity of the complex towards h-regions shorter than 18-20 amino acids. SPC associates with the translocon complex.

It is found in the endoplasmic reticulum membrane. The enzyme catalyses Cleavage of hydrophobic, N-terminal signal or leader sequences from secreted and periplasmic proteins.. In terms of biological role, catalytic component of the signal peptidase complex (SPC) which catalyzes the cleavage of N-terminal signal sequences from nascent proteins as they are translocated into the lumen of the endoplasmic reticulum. Specifically cleaves N-terminal signal peptides that contain a hydrophobic alpha-helix (h-region) shorter than 18-20 amino acids. This is Signal peptidase complex catalytic subunit SEC11 (SEC11) from Paracoccidioides brasiliensis (strain Pb18).